The chain runs to 430 residues: ATP-dependent RNA helicase cgh-1 (430 aa).

The Q motif motif lies at 43-71 (VEFEDFCLGRDLLMGIFEKGWEKPSPIQE). A Helicase ATP-binding domain is found at 74–244 (IGVALTGQDI…QKHMHKPYEI (171 aa)). Position 87 to 94 (87 to 94 (AKNGTGKT)) interacts with ATP. The DEAD box signature appears at 192–195 (DEAD). Positions 254-414 (GVTQYYAFVQ…PIPKTVDPKL (161 aa)) constitute a Helicase C-terminal domain.

This sequence belongs to the DEAD box helicase family. DDX6/DHH1 subfamily. In terms of assembly, interacts with car-1 in a germline ribonucleoprotein complex. Interacts with ifet-1. Interacts with oma-1, which is a component of a ribonucleoprotein complex, in an RNA-dependent manner. As to expression, expression is restricted to two germline precursors Z2 and Z3 in L1 stage hermaphrodites, and is detectable specifically in the gonad at low levels into the L3 stage. Expression is significantly higher during the early L4 stage. In adults, expression remains gonad-specific and was not apparent in the somatically derived uterus. Expressed in germ granules (P granules); when associated with pgl-1.

Its subcellular location is the cytoplasm. The enzyme catalyses ATP + H2O = ADP + phosphate + H(+). In terms of biological role, probable RNA helicase required for oocyte and sperm function. Also required to prevent the physiological germline apoptosis mechanism killing essentially all developing oocytes. In Caenorhabditis elegans, this protein is ATP-dependent RNA helicase cgh-1 (cgh-1).